We begin with the raw amino-acid sequence, 215 residues long: Large ribosomal subunit protein uL16 (215 aa).

Belongs to the universal ribosomal protein uL16 family. In terms of assembly, component of the large ribosomal subunit.

The protein localises to the cytoplasm. Its function is as follows. Component of the large ribosomal subunit. Plays a role in the formation of actively translating ribosomes. Plays a role in the embryonic brain development. This is Large ribosomal subunit protein uL16 from Danio rerio (Zebrafish).